Consider the following 936-residue polypeptide: Probable outer membrane protein pmp7 (936 aa).

Positions 1–23 are cleaved as a signal peptide; that stretch reads MKSSVSWLFFSSIPLFSSLSIVA. In terms of domain architecture, Autotransporter spans 636 to 936; it reads GEPFERELWL…NTNLGSKFCF (301 aa).

Belongs to the PMP outer membrane protein family.

The protein resides in the secreted. The protein localises to the cell wall. It localises to the cell outer membrane. This Chlamydia pneumoniae (Chlamydophila pneumoniae) protein is Probable outer membrane protein pmp7 (pmp7).